The primary structure comprises 226 residues: NEDD8-specific protease 1 (226 aa).

Belongs to the peptidase C48 family.

Its function is as follows. Processes the pre-form of the ubiquitin-like protein NEDD8/RUB1. Has the capacity to discriminate between NEDD8/RUB1 and ubiquitin. Has no SUMO protease activity. This is NEDD8-specific protease 1 (NEDP1) from Arabidopsis thaliana (Mouse-ear cress).